Reading from the N-terminus, the 3149-residue chain is Large tegument protein deneddylase (3149 aa).

A compositionally biased stretch (polar residues) spans 1 to 13 (MSNGDWGQSQRTR). The disordered stretch occupies residues 1-30 (MSNGDWGQSQRTRGTGPVRGIRTMDVNAPG). Residues 1-268 (MSNGDWGQSQ…YEANGSGFDL (268 aa)) are deubiquitination activity. The Peptidase C76 domain occupies 41–258 (LGTASCNQAH…MLEHYGVYDF (218 aa)). Active-site residues include Cys-61, Asp-193, and His-195. The disordered stretch occupies residues 319–341 (PAARYSPAKTNSPPSSPASAAPA). Tandem repeats lie at residues 335 to 339 (PASAA), 340 to 344 (PASAA), 345 to 349 (PASAA), 350 to 354 (PASAA), 355 to 359 (PASAA), 360 to 364 (PASAA), 365 to 369 (PASAA), and 370 to 374 (PASAA). The segment at 335-374 (PASAAPASAAPASAAPASAAPASAAPASAAPASAAPASAA) is 8 X 5 AA repeats of P-A-S-A-A. Disordered regions lie at residues 382–656 (FIPI…GSGL), 901–923 (LLSG…SIYR), 1143–1166 (APIS…TPPL), 1412–1434 (GRKE…RARE), 1644–1677 (PEAT…SALW), 2583–2839 (GLVS…PTAV), 2852–2981 (AAAS…PGAR), and 2995–3019 (QTYT…KCKD). Residues 462-483 (LPPPVIPIPHQSPPASPTPHPA) are compositionally biased toward pro residues. Composition is skewed to low complexity over residues 509–536 (AAPS…TTTL) and 544–564 (QPPQ…QPTP). Residues 554-584 (SPLLPQQQPTPSAAPAPSPLLPQQQPPPSAA) form an interaction with inner tegument protein region. Over residues 565–609 (SAAPAPSPLLPQQQPPPSAARAPSPLPPQQQPLPSATPAPPPAQQ) the composition is skewed to pro residues. Residues 1143–1155 (APISPASPSATPA) show a composition bias toward low complexity. The segment covering 2592-2603 (SADNTPASSDRL) has biased composition (polar residues). Residues 2711–2720 (QPAPQQPPSS) show a composition bias toward pro residues. Composition is skewed to polar residues over residues 2734 to 2745 (SPHSTPSTASGS) and 2784 to 2804 (SAAS…SSQD). Basic and acidic residues predominate over residues 2812–2827 (MQREKKQQGGREEAAE). Over residues 2874–2885 (APALGSGLAAPA) the composition is skewed to low complexity.

Belongs to the herpesviridae large tegument protein family. In terms of assembly, interacts with host CUL1 and CUL4A; these interactions inhibit the E3 ligase activity of cullins. Interacts with inner tegument protein. Interacts with capsid vertex specific component CVC2. Interacts with the major capsid protein/MCP. Interacts with host TRIM25 and YWHAZ.

It localises to the virion tegument. The protein localises to the host cytoplasm. The protein resides in the host nucleus. The enzyme catalyses Thiol-dependent hydrolysis of ester, thioester, amide, peptide and isopeptide bonds formed by the C-terminal Gly of ubiquitin (a 76-residue protein attached to proteins as an intracellular targeting signal).. Its function is as follows. Large tegument protein that plays multiple roles in the viral cycle. During viral entry, remains associated with the capsid while most of the tegument is detached and participates in the capsid transport toward the host nucleus. Plays a role in the routing of the capsid at the nuclear pore complex and subsequent uncoating. Within the host nucleus, acts as a deneddylase and promotes the degradation of nuclear CRLs (cullin-RING ubiquitin ligases) and thereby stabilizes nuclear CRL substrates, while cytoplasmic CRLs remain unaffected. These modifications prevent host cell cycle S-phase progression and create a favorable environment allowing efficient viral genome replication. Participates later in the secondary envelopment of capsids. Indeed, plays a linker role for the association of the outer viral tegument to the capsids together with the inner tegument protein. Counteracts host TLR-mediated NF-kappa-B activation through both MYD88 and TICAM1-dependent pathways by interfering with 'Lys-63'- and 'Lys-48'-linked ubiquitination of signaling intermediates such as TRAF6 and IKBKG. Inhibits type I interferon production by forming a tri-molecular complex with host TRIM25 and 14-3-3 thereby promoting TRIM25 autoubiquitination and sequestration of the ligase into inactive protein aggregates. In turn, host RIGI is recruited to the complex but ubiquitination is severely impaired leading to inhibition of the pathway. Also catalyzes the removal of 'Lys-48'- and 'Lys-63'-linked ubiquitin chains on host TBK1 and STING1 suppressing cGAS-STING signaling in addition to the RIGI-MAVS pathway. Inhibits selective autophagy by deubiquitinating host SQSTM1. In turn, decreased SQSTM1 ubiquitination fails to recruit LC3 to SQSTM1-positive aggregates. In the host nucleus, deubiquitinates topoisomerase II subunits TOP2A and TOP2B thereby stabilizing SUMOylated TOP2 which halts the DNA damage response to TOP2-induced double strand DNA breaks and promotes cell survival. The protein is Large tegument protein deneddylase of Epstein-Barr virus (strain B95-8) (HHV-4).